Reading from the N-terminus, the 500-residue chain is NAD(P)H-quinone oxidoreductase chain 4, chloroplastic (500 aa).

A run of 14 helical transmembrane segments spans residues 4 to 24 (FPWL…IFFL), 35 to 55 (YTIC…CYHF), 87 to 107 (IGPV…AWPV), 113 to 130 (LFHF…GSFS), 134 to 154 (LLLF…LLSM), 167 to 187 (FILY…GVGL), 207 to 227 (VALE…KLPI), 242 to 262 (HYST…YGLI), 272 to 292 (AHSI…IYAA), 305 to 325 (IAYS…SITD), 330 to 350 (GAIL…FLAG), 386 to 406 (LALP…GIIT), 416 to 436 (IVIT…LLSM), and 462 to 482 (LFVS…PDFV).

Belongs to the complex I subunit 4 family.

The protein localises to the plastid. Its subcellular location is the chloroplast thylakoid membrane. The enzyme catalyses a plastoquinone + NADH + (n+1) H(+)(in) = a plastoquinol + NAD(+) + n H(+)(out). It carries out the reaction a plastoquinone + NADPH + (n+1) H(+)(in) = a plastoquinol + NADP(+) + n H(+)(out). This Guizotia abyssinica (Niger) protein is NAD(P)H-quinone oxidoreductase chain 4, chloroplastic.